Reading from the N-terminus, the 217-residue chain is MARKGILGTKLGMTQVFDESNRVVPVTVVKAGPNVVTRIRTPERDGYSAVQLAYGEISPRKVNKPLTGQYTAAGVNPRRYLAELRLDDSDAATEYQVGQELTAEIFADGSYVDVTGTSKGKGFAGTMKRHGFRGQGASHGAQAVHRRPGSIGGCATPARVFKGTRMAGRMGNDRVTVLNLLVHKVDAENGVLLIKGAVPGRTGGLVMVRSAIKRGEK.

Belongs to the universal ribosomal protein uL3 family. In terms of assembly, part of the 50S ribosomal subunit. Forms a cluster with proteins L14 and L19.

One of the primary rRNA binding proteins, it binds directly near the 3'-end of the 23S rRNA, where it nucleates assembly of the 50S subunit. The protein is Large ribosomal subunit protein uL3 of Mycobacterium bovis (strain ATCC BAA-935 / AF2122/97).